Reading from the N-terminus, the 133-residue chain is MVNDTIADMITRIRNANLITQKQVAVIASNTNKGIAQCLLKEGFIESIEYNTNSSNNPELILSLKYQGKKRKPYITALQRVSKSGLRVYTSYKDIPKVLGGIGIAILSTSQGILTDKQARMQKIGGEILCYIW.

This sequence belongs to the universal ribosomal protein uS8 family. As to quaternary structure, part of the 30S ribosomal subunit.

The protein resides in the plastid. It localises to the chloroplast. One of the primary rRNA binding proteins, it binds directly to 16S rRNA central domain where it helps coordinate assembly of the platform of the 30S subunit. The protein is Small ribosomal subunit protein uS8c (rps8) of Mesostigma viride (Green alga).